We begin with the raw amino-acid sequence, 302 residues long: Sulfate adenylyltransferase subunit 2 (302 aa).

Belongs to the PAPS reductase family. CysD subfamily. In terms of assembly, heterodimer composed of CysD, the smaller subunit, and CysN.

It carries out the reaction sulfate + ATP + H(+) = adenosine 5'-phosphosulfate + diphosphate. It participates in sulfur metabolism; hydrogen sulfide biosynthesis; sulfite from sulfate: step 1/3. Its function is as follows. With CysN forms the ATP sulfurylase (ATPS) that catalyzes the adenylation of sulfate producing adenosine 5'-phosphosulfate (APS) and diphosphate, the first enzymatic step in sulfur assimilation pathway. APS synthesis involves the formation of a high-energy phosphoric-sulfuric acid anhydride bond driven by GTP hydrolysis by CysN coupled to ATP hydrolysis by CysD. The chain is Sulfate adenylyltransferase subunit 2 from Pectobacterium carotovorum subsp. carotovorum (strain PC1).